The following is a 257-amino-acid chain: uncharacterized protein (257 aa).

The first 26 residues, 1–26 (MKKAFILSAAAAVGLFTFGGVQQASA), serve as a signal peptide directing secretion. Residues 80–135 (AKQSNVKVQDVQKTETAKPAQKTTEKAAADQNTASKAPATAEKTNTTTSAPSSVSA) form a disordered region. Residues 121-134 (EKTNTTTSAPSSVS) show a composition bias toward polar residues. In terms of domain architecture, SCP spans 141–254 (VELTNAERQK…ESGSIWTQQF (114 aa)).

This is an uncharacterized protein from Bacillus subtilis (strain 168).